Here is a 477-residue protein sequence, read N- to C-terminus: Ribulose bisphosphate carboxylase large chain (477 aa).

The propeptide occupies 1 to 2; the sequence is MS. N-acetylproline is present on proline 3. An N6,N6,N6-trimethyllysine modification is found at lysine 14. Substrate-binding residues include asparagine 123 and threonine 173. The active-site Proton acceptor is the lysine 175. Lysine 177 is a binding site for substrate. The Mg(2+) site is built by lysine 201, aspartate 203, and glutamate 204. An N6-carboxylysine modification is found at lysine 201. Histidine 294 functions as the Proton acceptor in the catalytic mechanism. Arginine 295, histidine 327, and serine 379 together coordinate substrate.

This sequence belongs to the RuBisCO large chain family. Type I subfamily. As to quaternary structure, heterohexadecamer of 8 large chains and 8 small chains; disulfide-linked. The disulfide link is formed within the large subunit homodimers. Mg(2+) serves as cofactor. The disulfide bond which can form in the large chain dimeric partners within the hexadecamer appears to be associated with oxidative stress and protein turnover.

It localises to the plastid. Its subcellular location is the chloroplast. It carries out the reaction 2 (2R)-3-phosphoglycerate + 2 H(+) = D-ribulose 1,5-bisphosphate + CO2 + H2O. The enzyme catalyses D-ribulose 1,5-bisphosphate + O2 = 2-phosphoglycolate + (2R)-3-phosphoglycerate + 2 H(+). RuBisCO catalyzes two reactions: the carboxylation of D-ribulose 1,5-bisphosphate, the primary event in carbon dioxide fixation, as well as the oxidative fragmentation of the pentose substrate in the photorespiration process. Both reactions occur simultaneously and in competition at the same active site. The protein is Ribulose bisphosphate carboxylase large chain of Nicotiana debneyi (Debney's tobacco).